Consider the following 299-residue polypeptide: ATP phosphoribosyltransferase (299 aa).

The protein belongs to the ATP phosphoribosyltransferase family. Long subfamily. Mg(2+) is required as a cofactor.

Its subcellular location is the cytoplasm. It catalyses the reaction 1-(5-phospho-beta-D-ribosyl)-ATP + diphosphate = 5-phospho-alpha-D-ribose 1-diphosphate + ATP. It participates in amino-acid biosynthesis; L-histidine biosynthesis; L-histidine from 5-phospho-alpha-D-ribose 1-diphosphate: step 1/9. Feedback inhibited by histidine. Its function is as follows. Catalyzes the condensation of ATP and 5-phosphoribose 1-diphosphate to form N'-(5'-phosphoribosyl)-ATP (PR-ATP). Has a crucial role in the pathway because the rate of histidine biosynthesis seems to be controlled primarily by regulation of HisG enzymatic activity. The sequence is that of ATP phosphoribosyltransferase from Baumannia cicadellinicola subsp. Homalodisca coagulata.